The primary structure comprises 185 residues: Translation initiation factor IF-3 (185 aa).

The protein belongs to the IF-3 family. Monomer.

The protein localises to the cytoplasm. In terms of biological role, IF-3 binds to the 30S ribosomal subunit and shifts the equilibrium between 70S ribosomes and their 50S and 30S subunits in favor of the free subunits, thus enhancing the availability of 30S subunits on which protein synthesis initiation begins. The polypeptide is Translation initiation factor IF-3 (Streptococcus pneumoniae (strain Hungary19A-6)).